The following is a 306-amino-acid chain: Aspartate carbamoyltransferase catalytic subunit (306 aa).

Arg51 and Thr52 together coordinate carbamoyl phosphate. Lys80 contacts L-aspartate. The carbamoyl phosphate site is built by Arg101, His129, and Gln132. L-aspartate is bound by residues Arg162 and Arg224. Leu263 and Pro264 together coordinate carbamoyl phosphate.

The protein belongs to the aspartate/ornithine carbamoyltransferase superfamily. ATCase family. In terms of assembly, heterododecamer (2C3:3R2) of six catalytic PyrB chains organized as two trimers (C3), and six regulatory PyrI chains organized as three dimers (R2).

The catalysed reaction is carbamoyl phosphate + L-aspartate = N-carbamoyl-L-aspartate + phosphate + H(+). The protein operates within pyrimidine metabolism; UMP biosynthesis via de novo pathway; (S)-dihydroorotate from bicarbonate: step 2/3. Its function is as follows. Catalyzes the condensation of carbamoyl phosphate and aspartate to form carbamoyl aspartate and inorganic phosphate, the committed step in the de novo pyrimidine nucleotide biosynthesis pathway. This is Aspartate carbamoyltransferase catalytic subunit from Parabacteroides distasonis (strain ATCC 8503 / DSM 20701 / CIP 104284 / JCM 5825 / NCTC 11152).